The following is a 431-amino-acid chain: Adenylosuccinate synthetase (431 aa).

Residues 13–19 (GDEGKGK) and 41–43 (GHT) contribute to the GTP site. The active-site Proton acceptor is Asp-14. Residues Asp-14 and Gly-41 each coordinate Mg(2+). Residues 14 to 17 (DEGK), 39 to 42 (NAGH), Thr-130, Arg-144, Gln-225, Thr-240, and Arg-304 contribute to the IMP site. His-42 (proton donor) is an active-site residue. Residue 300–306 (AVTGRPR) coordinates substrate. Residues Arg-306, 332 to 334 (KLD), and 415 to 417 (STG) contribute to the GTP site.

Belongs to the adenylosuccinate synthetase family. As to quaternary structure, homodimer. Mg(2+) is required as a cofactor.

The protein localises to the cytoplasm. It catalyses the reaction IMP + L-aspartate + GTP = N(6)-(1,2-dicarboxyethyl)-AMP + GDP + phosphate + 2 H(+). Its pathway is purine metabolism; AMP biosynthesis via de novo pathway; AMP from IMP: step 1/2. In terms of biological role, plays an important role in the de novo pathway of purine nucleotide biosynthesis. Catalyzes the first committed step in the biosynthesis of AMP from IMP. In Legionella pneumophila (strain Paris), this protein is Adenylosuccinate synthetase.